A 274-amino-acid polypeptide reads, in one-letter code: Proteasome subunit beta type-7-B (274 aa).

The propeptide at 1–37 (MSQSSVDIPPKGGFSFDLCKRNDMLTQKGLKAPSFLK) is removed in mature form. Residue Thr40 is the Nucleophile of the active site.

Belongs to the peptidase T1B family. In terms of assembly, component of the 20S core complex of the 26S proteasome. The 26S proteasome is composed of a core protease (CP), known as the 20S proteasome, capped at one or both ends by the 19S regulatory particle (RP/PA700). The 20S proteasome core is composed of 28 subunits that are arranged in four stacked rings, resulting in a barrel-shaped structure. The two end rings are each formed by seven alpha subunits, and the two central rings are each formed by seven beta subunits. The catalytic chamber with the active sites is on the inside of the barrel.

It localises to the cytoplasm. The protein localises to the nucleus. It carries out the reaction Cleavage of peptide bonds with very broad specificity.. Its function is as follows. The proteasome is a multicatalytic proteinase complex which is characterized by its ability to cleave peptides with Arg, Phe, Tyr, Leu, and Glu adjacent to the leaving group at neutral or slightly basic pH. The proteasome has an ATP-dependent proteolytic activity. In Arabidopsis thaliana (Mouse-ear cress), this protein is Proteasome subunit beta type-7-B (PBB2).